Reading from the N-terminus, the 174-residue chain is MIDSDGFRANVGIIICNRYGQVMWARRFGQHSWQFPQGGVDDGESAEEAMYRELYEEVGLRPEHVTILTSTRSWLRYRLPKRLVRQDSKPVCIGQKQKWFLLQLKSQDSAINLSSSGHPEFDDWRWVSYWYPVRQVVSFKRDVYRKVMKEFAVTALSFQTQEIPRKRVRQRTTG.

A Nudix hydrolase domain is found at G6 to K149. A Nudix box motif is present at residues G38 to G59.

The protein belongs to the Nudix hydrolase family. RppH subfamily. Requires a divalent metal cation as cofactor.

Accelerates the degradation of transcripts by removing pyrophosphate from the 5'-end of triphosphorylated RNA, leading to a more labile monophosphorylated state that can stimulate subsequent ribonuclease cleavage. The sequence is that of RNA pyrophosphohydrolase from Shewanella sp. (strain ANA-3).